Reading from the N-terminus, the 76-residue chain is Sec-independent protein translocase protein TatA (76 aa).

Residues 1–21 (MGSFSIWHWLIVLLIVVLVFG) traverse the membrane as a helical segment. Residues 44–76 (RDGSTAPADPAQQVTANKSADANTVDVEAKQKS) form a disordered region. Positions 55–65 (QQVTANKSADA) are enriched in polar residues.

Belongs to the TatA/E family. In terms of assembly, the Tat system comprises two distinct complexes: a TatABC complex, containing multiple copies of TatA, TatB and TatC subunits, and a separate TatA complex, containing only TatA subunits. Substrates initially bind to the TatABC complex, which probably triggers association of the separate TatA complex to form the active translocon.

It is found in the cell inner membrane. Functionally, part of the twin-arginine translocation (Tat) system that transports large folded proteins containing a characteristic twin-arginine motif in their signal peptide across membranes. TatA could form the protein-conducting channel of the Tat system. This is Sec-independent protein translocase protein TatA from Methylibium petroleiphilum (strain ATCC BAA-1232 / LMG 22953 / PM1).